The chain runs to 159 residues: 2-C-methyl-D-erythritol 2,4-cyclodiphosphate synthase (159 aa).

The a divalent metal cation site is built by Asp8 and His10. 4-CDP-2-C-methyl-D-erythritol 2-phosphate contacts are provided by residues 8–10 (DVH) and 34–35 (HS). Residue His42 participates in a divalent metal cation binding. Residues 56–58 (DIG), 61–65 (FPDTD), 100–106 (AQAPRML), 132–135 (TTTE), Phe139, and Arg142 contribute to the 4-CDP-2-C-methyl-D-erythritol 2-phosphate site.

This sequence belongs to the IspF family. In terms of assembly, homotrimer. It depends on a divalent metal cation as a cofactor.

The catalysed reaction is 4-CDP-2-C-methyl-D-erythritol 2-phosphate = 2-C-methyl-D-erythritol 2,4-cyclic diphosphate + CMP. It participates in isoprenoid biosynthesis; isopentenyl diphosphate biosynthesis via DXP pathway; isopentenyl diphosphate from 1-deoxy-D-xylulose 5-phosphate: step 4/6. Its function is as follows. Involved in the biosynthesis of isopentenyl diphosphate (IPP) and dimethylallyl diphosphate (DMAPP), two major building blocks of isoprenoid compounds. Catalyzes the conversion of 4-diphosphocytidyl-2-C-methyl-D-erythritol 2-phosphate (CDP-ME2P) to 2-C-methyl-D-erythritol 2,4-cyclodiphosphate (ME-CPP) with a corresponding release of cytidine 5-monophosphate (CMP). This Escherichia coli O6:K15:H31 (strain 536 / UPEC) protein is 2-C-methyl-D-erythritol 2,4-cyclodiphosphate synthase.